Here is a 700-residue protein sequence, read N- to C-terminus: Methionine--tRNA ligase (700 aa).

Positions P14 to H24 match the 'HIGH' region motif. 4 residues coordinate Zn(2+): C146, C149, C159, and C162. The 'KMSKS' region motif lies at K343 to S347. K346 is a binding site for ATP. One can recognise a tRNA-binding domain in the interval E599 to K700.

This sequence belongs to the class-I aminoacyl-tRNA synthetase family. MetG type 1 subfamily. As to quaternary structure, homodimer. Zn(2+) is required as a cofactor.

The protein resides in the cytoplasm. It catalyses the reaction tRNA(Met) + L-methionine + ATP = L-methionyl-tRNA(Met) + AMP + diphosphate. Its function is as follows. Is required not only for elongation of protein synthesis but also for the initiation of all mRNA translation through initiator tRNA(fMet) aminoacylation. The sequence is that of Methionine--tRNA ligase from Chloroherpeton thalassium (strain ATCC 35110 / GB-78).